The sequence spans 389 residues: Tyrosine aminotransferase (389 aa).

At Lys242 the chain carries N6-(pyridoxal phosphate)lysine.

The protein belongs to the class-I pyridoxal-phosphate-dependent aminotransferase family. Homodimer. Requires pyridoxal 5'-phosphate as cofactor.

It catalyses the reaction L-tyrosine + 2-oxoglutarate = 3-(4-hydroxyphenyl)pyruvate + L-glutamate. It functions in the pathway amino-acid degradation; L-phenylalanine degradation; acetoacetate and fumarate from L-phenylalanine: step 2/6. Transaminase involved in tyrosine breakdown. Converts tyrosine to p-hydroxyphenylpyruvate. The polypeptide is Tyrosine aminotransferase (tatA) (Rhizobium meliloti (strain 1021) (Ensifer meliloti)).